Reading from the N-terminus, the 133-residue chain is Ribosome-binding factor A (133 aa).

Belongs to the RbfA family. Monomer. Binds 30S ribosomal subunits, but not 50S ribosomal subunits or 70S ribosomes.

The protein resides in the cytoplasm. Functionally, one of several proteins that assist in the late maturation steps of the functional core of the 30S ribosomal subunit. Associates with free 30S ribosomal subunits (but not with 30S subunits that are part of 70S ribosomes or polysomes). Required for efficient processing of 16S rRNA. May interact with the 5'-terminal helix region of 16S rRNA. The polypeptide is Ribosome-binding factor A (Klebsiella pneumoniae (strain 342)).